The chain runs to 158 residues: 2-C-methyl-D-erythritol 2,4-cyclodiphosphate synthase (158 aa).

A divalent metal cation is bound by residues Asp9 and His11. 4-CDP-2-C-methyl-D-erythritol 2-phosphate-binding positions include 9–11 (DVH) and 35–36 (HS). His43 serves as a coordination point for a divalent metal cation. Residues 57 to 59 (DIG), 62 to 66 (FPDTD), 101 to 107 (AQKPKMA), 133 to 136 (TTTE), Phe140, and Arg143 each bind 4-CDP-2-C-methyl-D-erythritol 2-phosphate.

Belongs to the IspF family. Homotrimer. Requires a divalent metal cation as cofactor.

The catalysed reaction is 4-CDP-2-C-methyl-D-erythritol 2-phosphate = 2-C-methyl-D-erythritol 2,4-cyclic diphosphate + CMP. It participates in isoprenoid biosynthesis; isopentenyl diphosphate biosynthesis via DXP pathway; isopentenyl diphosphate from 1-deoxy-D-xylulose 5-phosphate: step 4/6. Its function is as follows. Involved in the biosynthesis of isopentenyl diphosphate (IPP) and dimethylallyl diphosphate (DMAPP), two major building blocks of isoprenoid compounds. Catalyzes the conversion of 4-diphosphocytidyl-2-C-methyl-D-erythritol 2-phosphate (CDP-ME2P) to 2-C-methyl-D-erythritol 2,4-cyclodiphosphate (ME-CPP) with a corresponding release of cytidine 5-monophosphate (CMP). The polypeptide is 2-C-methyl-D-erythritol 2,4-cyclodiphosphate synthase (Bacillus thuringiensis subsp. konkukian (strain 97-27)).